Consider the following 916-residue polypeptide: DNA gyrase subunit A (916 aa).

In terms of domain architecture, Topo IIA-type catalytic spans 42–544 (LPDVRDGLKP…FGGDIADEDL (503 aa)). Catalysis depends on Tyr-130, which acts as the O-(5'-phospho-DNA)-tyrosine intermediate. The GyrA-box motif lies at 571-577 (QRRGGRG). Over residues 739 to 748 (SDDLEDETAD) the composition is skewed to acidic residues. 2 disordered regions span residues 739–774 (SDDL…RGMR) and 897–916 (ESEL…EAEN).

It belongs to the type II topoisomerase GyrA/ParC subunit family. As to quaternary structure, heterotetramer, composed of two GyrA and two GyrB chains. In the heterotetramer, GyrA contains the active site tyrosine that forms a transient covalent intermediate with DNA, while GyrB binds cofactors and catalyzes ATP hydrolysis.

The protein resides in the cytoplasm. It carries out the reaction ATP-dependent breakage, passage and rejoining of double-stranded DNA.. Its function is as follows. A type II topoisomerase that negatively supercoils closed circular double-stranded (ds) DNA in an ATP-dependent manner to modulate DNA topology and maintain chromosomes in an underwound state. Negative supercoiling favors strand separation, and DNA replication, transcription, recombination and repair, all of which involve strand separation. Also able to catalyze the interconversion of other topological isomers of dsDNA rings, including catenanes and knotted rings. Type II topoisomerases break and join 2 DNA strands simultaneously in an ATP-dependent manner. The polypeptide is DNA gyrase subunit A (Neisseria gonorrhoeae).